The sequence spans 337 residues: Glyceraldehyde-3-phosphate dehydrogenase 2 (337 aa).

NADP(+) is bound by residues 11–12, Asp35, Arg80, and Thr122; that span reads RI. Residues 153 to 155, Thr184, Arg199, 212 to 213, and Arg235 each bind D-glyceraldehyde 3-phosphate; these read SCT and TG. Catalysis depends on Cys154, which acts as the Nucleophile. Asn317 is an NADP(+) binding site.

Belongs to the glyceraldehyde-3-phosphate dehydrogenase family. Homotetramer.

Its subcellular location is the cytoplasm. The catalysed reaction is D-glyceraldehyde 3-phosphate + phosphate + NADP(+) = (2R)-3-phospho-glyceroyl phosphate + NADPH + H(+). The enzyme catalyses D-glyceraldehyde 3-phosphate + phosphate + NAD(+) = (2R)-3-phospho-glyceroyl phosphate + NADH + H(+). Its pathway is carbohydrate biosynthesis; Calvin cycle. Functionally, gap2 has a major role in carbon fixation as a component of the Calvin cycle. Catalyzes the oxidative phosphorylation of glyceraldehyde 3-phosphate (G3P) to 1,3-bisphosphoglycerate (BPG) using the cofactor NAD. The first reaction step involves the formation of a hemiacetal intermediate between G3P and a cysteine residue, and this hemiacetal intermediate is then oxidized to a thioester, with concomitant reduction of NAD to NADH. The reduced NADH is then exchanged with the second NAD, and the thioester is attacked by a nucleophilic inorganic phosphate to produce BPG. This chain is Glyceraldehyde-3-phosphate dehydrogenase 2 (gap2), found in Trichormus variabilis (strain ATCC 29413 / PCC 7937) (Anabaena variabilis).